The sequence spans 210 residues: Ribosomal RNA large subunit methyltransferase E (210 aa).

Positions 67, 69, 87, 103, and 128 each coordinate S-adenosyl-L-methionine. Lys168 functions as the Proton acceptor in the catalytic mechanism.

Belongs to the class I-like SAM-binding methyltransferase superfamily. RNA methyltransferase RlmE family.

It is found in the cytoplasm. It catalyses the reaction uridine(2552) in 23S rRNA + S-adenosyl-L-methionine = 2'-O-methyluridine(2552) in 23S rRNA + S-adenosyl-L-homocysteine + H(+). Its function is as follows. Specifically methylates the uridine in position 2552 of 23S rRNA at the 2'-O position of the ribose in the fully assembled 50S ribosomal subunit. The polypeptide is Ribosomal RNA large subunit methyltransferase E (Psychrobacter cryohalolentis (strain ATCC BAA-1226 / DSM 17306 / VKM B-2378 / K5)).